The sequence spans 545 residues: Glucose-6-phosphate isomerase (545 aa).

Glu343 functions as the Proton donor in the catalytic mechanism. Residues His374 and Lys513 contribute to the active site.

Belongs to the GPI family.

It is found in the cytoplasm. The enzyme catalyses alpha-D-glucose 6-phosphate = beta-D-fructose 6-phosphate. It functions in the pathway carbohydrate biosynthesis; gluconeogenesis. The protein operates within carbohydrate degradation; glycolysis; D-glyceraldehyde 3-phosphate and glycerone phosphate from D-glucose: step 2/4. Functionally, catalyzes the reversible isomerization of glucose-6-phosphate to fructose-6-phosphate. The polypeptide is Glucose-6-phosphate isomerase (Methylibium petroleiphilum (strain ATCC BAA-1232 / LMG 22953 / PM1)).